The following is a 142-amino-acid chain: Nucleoside diphosphate kinase (142 aa).

ATP is bound by residues Lys11, Phe59, Arg87, Thr93, Arg104, and Asn114. His117 functions as the Pros-phosphohistidine intermediate in the catalytic mechanism.

It belongs to the NDK family. In terms of assembly, homotetramer. Mg(2+) serves as cofactor.

Its subcellular location is the cytoplasm. The catalysed reaction is a 2'-deoxyribonucleoside 5'-diphosphate + ATP = a 2'-deoxyribonucleoside 5'-triphosphate + ADP. It carries out the reaction a ribonucleoside 5'-diphosphate + ATP = a ribonucleoside 5'-triphosphate + ADP. Major role in the synthesis of nucleoside triphosphates other than ATP. The ATP gamma phosphate is transferred to the NDP beta phosphate via a ping-pong mechanism, using a phosphorylated active-site intermediate. This Pectobacterium atrosepticum (strain SCRI 1043 / ATCC BAA-672) (Erwinia carotovora subsp. atroseptica) protein is Nucleoside diphosphate kinase.